The chain runs to 82 residues: UPF0291 protein LVIS_1359 (82 aa).

This sequence belongs to the UPF0291 family.

It is found in the cytoplasm. The chain is UPF0291 protein LVIS_1359 from Levilactobacillus brevis (strain ATCC 367 / BCRC 12310 / CIP 105137 / JCM 1170 / LMG 11437 / NCIMB 947 / NCTC 947) (Lactobacillus brevis).